The chain runs to 350 residues: MSIIAINENGFLDKIKGRNPLFTCVISSIETTLSIPISGVHRDVIKYTPSADVELVFYGKSLTLKTPPIDATGSPTPATITRACVELKNIKNLHIDAGAFVKPKIPFIEIDEKPTGRIEEGKAMNNSKELYMKGYLLGKNLDAELLIVGESVPGGTTTALGVLLGLGYDAEGKVSSGSINNPHELKIKVVREGLKKAGINEKSSVFDVLNAVGDKMMPVVAGLAISFAERNKPVILAGGTQMSAVLAVIKEINKKVLDKNLIAIGTTEFVLNDKKGDLKGIVEQIGNVPVLASKFYFEKAKIEGLKNYCKGSVKEGVGAGGIAVYSIVNDLEPTKIREFIENKFYEWYKE.

Belongs to the UPF0284 family.

This Methanocaldococcus jannaschii (strain ATCC 43067 / DSM 2661 / JAL-1 / JCM 10045 / NBRC 100440) (Methanococcus jannaschii) protein is UPF0284 protein MJ1598.